The primary structure comprises 220 residues: DNA replication complex GINS protein SLD5 (220 aa).

This sequence belongs to the GINS4/SLD5 family. In terms of assembly, component of the GINS complex. Interacts with EOL1 in the nucleus.

Its subcellular location is the nucleus. The GINS complex plays an essential role in the initiation of DNA replication. Required during embryogenesis. The protein is DNA replication complex GINS protein SLD5 of Arabidopsis thaliana (Mouse-ear cress).